Reading from the N-terminus, the 1521-residue chain is Retroelement silencing factor 1 (1521 aa).

A Glycyl lysine isopeptide (Lys-Gly) (interchain with G-Cter in SUMO2) cross-link involves residue Lys223. Positions 621–640 (EKQHKPIQGDPDIADSSLGK) are disordered. A Phosphoserine modification is found at Ser910. The residue at position 996 (Thr996) is a Phosphothreonine. Polar residues-rich tracts occupy residues 1093–1105 (KNMPFSKQASQES) and 1124–1142 (LSSNTDPCRSNTSSVQSVS). Disordered stretches follow at residues 1093 to 1147 (KNMP…EKKK), 1204 to 1230 (ERASVQEKTVPSPESSDPKGSSSKSTR), and 1312 to 1335 (EASRTHSVSNNNKGKFDGKQPDKM). The residue at position 1142 (Ser1142) is a Phosphoserine. Residues 1214 to 1228 (PSPESSDPKGSSSKS) show a composition bias toward low complexity. Basic and acidic residues predominate over residues 1325 to 1335 (GKFDGKQPDKM). Lys1411 participates in a covalent cross-link: Glycyl lysine isopeptide (Lys-Gly) (interchain with G-Cter in SUMO2). 2 disordered regions span residues 1425-1444 (DKQDCPGPGPEKEQAPVQVS) and 1457-1485 (IPTRTKMPESSQRDSADSRLSKRSLSADE). Positions 1467 to 1476 (SQRDSADSRL) are enriched in basic and acidic residues. A phosphoserine mark is found at Ser1482 and Ser1514.

As to quaternary structure, interacts with SETDB1.

The protein localises to the nucleus. In terms of biological role, plays a role in the regulation of imprinted gene expression, regulates repressive epigenetic modifications associated with SETDB1. Required for the recruitment or accumulation of SETDB1 to the endogenous retroviruses (ERVs) and maintenance of repressive chromatin configuration, contributing to a subset of the SETDB1-dependent ERV silencing in embryonic stem cells. This is Retroelement silencing factor 1 from Mus musculus (Mouse).